A 428-amino-acid chain; its full sequence is Flotillin-1 (428 aa).

Phosphoserine occurs at positions 19, 163, and 385. Thr387 carries the post-translational modification Phosphothreonine.

It belongs to the band 7/mec-2 family. Flotillin subfamily. Heterooligomeric complex of flotillin-1 and flotillin-2 and caveolin-1 and caveolin-2. Interacts with ECPAS. High expression in brain, white adipose tissue, heart muscle, skeletal muscle and lung. Low expression in spleen, liver and testis.

The protein resides in the cell membrane. It is found in the endosome. It localises to the membrane. The protein localises to the caveola. Its subcellular location is the melanosome. The protein resides in the membrane raft. May act as a scaffolding protein within caveolar membranes, functionally participating in formation of caveolae or caveolae-like vesicles. This is Flotillin-1 (Flot1) from Mus musculus (Mouse).